Consider the following 722-residue polypeptide: Probable cation-transporting ATPase HI_0290 (722 aa).

The HMA domain occupies 9–75 (KKISIQIGGM…IIHKTGFSAH (67 aa)). A metal cation contacts are provided by C20 and C23. 6 consecutive transmembrane segments (helical) span residues 94–114 (LIVL…MIGG), 118–138 (LMLP…WLAI), 157–177 (VLVS…LFYH), 180–200 (HAMG…VSLG), 340–360 (VFVP…YILT), and 373–393 (VLVI…IMVG). D422 (4-aspartylphosphate intermediate) is an active-site residue. A run of 4 helical transmembrane segments spans residues 523–543 (IWQI…GAFA), 608–628 (LGHI…LASA), 675–695 (LFFA…GFLS), and 697–717 (IIAG…ALRL). The Mg(2+) site is built by D617 and D621.

Belongs to the cation transport ATPase (P-type) (TC 3.A.3) family. Type IB subfamily.

It is found in the cell membrane. The enzyme catalyses ATP + H2O = ADP + phosphate + H(+). This chain is Probable cation-transporting ATPase HI_0290, found in Haemophilus influenzae (strain ATCC 51907 / DSM 11121 / KW20 / Rd).